Reading from the N-terminus, the 306-residue chain is Recombination-associated protein RdgC (306 aa).

It belongs to the RdgC family.

The protein localises to the cytoplasm. Its subcellular location is the nucleoid. May be involved in recombination. The sequence is that of Recombination-associated protein RdgC from Pseudomonas fluorescens (strain Pf0-1).